A 122-amino-acid polypeptide reads, in one-letter code: Flagellar protein FliT (122 aa).

The segment at 1 to 50 (MTSTVEFINRWQRIALLSQSLLELAQRGEWDLLLQQEVSYLQRIETVMEK) is required for homodimerization. Residues 60 to 98 (IQDMVAGYIKQTLDNEQLLKGLLQQRLDELSSLIGQSTR) form a fliD binding region.

The protein belongs to the FliT family. As to quaternary structure, homodimer. Interacts with FliD and FlhC.

It is found in the cytoplasm. The protein localises to the cytosol. Functionally, dual-function protein that regulates the transcription of class 2 flagellar operons and that also acts as an export chaperone for the filament-capping protein FliD. As a transcriptional regulator, acts as an anti-FlhDC factor; it directly binds FlhC, thus inhibiting the binding of the FlhC/FlhD complex to class 2 promoters, resulting in decreased expression of class 2 flagellar operons. As a chaperone, effects FliD transition to the membrane by preventing its premature polymerization, and by directing it to the export apparatus. The sequence is that of Flagellar protein FliT from Salmonella paratyphi A (strain AKU_12601).